The primary structure comprises 393 residues: MLSRTIRTQGSFLRRSQLTITRSFSVTFNMQNAQKRSPTGIVLMNMGGPSKVEETYDFLYQLFADNDLIPISAKYQKTIAKYIAKFRTPKIEKQYREIGGGSPIRKWSEYQATEVCKILDKTCPETAPHKPYVAFRYAKPLTAETYKQMLKDGVKKAVAFSQYPHFSYSTTGSSINELWRQIKALDSERSISWSVIDRWPTNEGLIKAFSENITKKLQEFPQPVRDKVVLLFSAHSLPMDVVNTGDAYPAEVAATVYNIMQKLKFKNPYRLVWQSQVGPKPWLGAQTAEIAEFLGPKVDGLMFIPIAFTSDHIETLHEIDLGVIGESEYKDKFKRCESLNGNQTFIEGMADLVKSHLQSNQLYSNQLPLDFALGKSNDPVKDLSLVFGNHEST.

The transit peptide at 1 to 31 (MLSRTIRTQGSFLRRSQLTITRSFSVTFNMQ) directs the protein to the mitochondrion. The active site involves Asp351.

The protein belongs to the ferrochelatase family. Post-translationally, the leader peptide may be processed in two proteolytic steps, first between Ser-23 and Phe-24, second and by a different protease, to yield the mature protein.

Its subcellular location is the mitochondrion inner membrane. The enzyme catalyses heme b + 2 H(+) = protoporphyrin IX + Fe(2+). The protein operates within porphyrin-containing compound metabolism; protoheme biosynthesis; protoheme from protoporphyrin-IX: step 1/1. Catalyzes the ferrous insertion into protoporphyrin IX. This Saccharomyces cerevisiae (strain ATCC 204508 / S288c) (Baker's yeast) protein is Ferrochelatase, mitochondrial (HEM15).